Consider the following 1247-residue polypeptide: DNA-directed RNA polymerase subunit beta (1247 aa).

It belongs to the RNA polymerase beta chain family. In terms of assembly, in plastids the minimal PEP RNA polymerase catalytic core is composed of four subunits: alpha, beta, beta', and beta''. When a (nuclear-encoded) sigma factor is associated with the core the holoenzyme is formed, which can initiate transcription.

The protein resides in the plastid. It carries out the reaction RNA(n) + a ribonucleoside 5'-triphosphate = RNA(n+1) + diphosphate. Functionally, DNA-dependent RNA polymerase catalyzes the transcription of DNA into RNA using the four ribonucleoside triphosphates as substrates. This Helicosporidium sp. subsp. Simulium jonesii (Green alga) protein is DNA-directed RNA polymerase subunit beta (rpoB).